Consider the following 310-residue polypeptide: tRNA dimethylallyltransferase (310 aa).

19–26 (GPTGTGKS) is a binding site for ATP. Substrate is bound at residue 21–26 (TGTGKS).

The protein belongs to the IPP transferase family. Monomer. The cofactor is Mg(2+).

The enzyme catalyses adenosine(37) in tRNA + dimethylallyl diphosphate = N(6)-dimethylallyladenosine(37) in tRNA + diphosphate. Functionally, catalyzes the transfer of a dimethylallyl group onto the adenine at position 37 in tRNAs that read codons beginning with uridine, leading to the formation of N6-(dimethylallyl)adenosine (i(6)A). The chain is tRNA dimethylallyltransferase from Saccharopolyspora erythraea (strain ATCC 11635 / DSM 40517 / JCM 4748 / NBRC 13426 / NCIMB 8594 / NRRL 2338).